A 122-amino-acid polypeptide reads, in one-letter code: Serum amyloid A-3 protein (122 aa).

The first 18 residues, 1–18 (MKLSIGIIFCFLILGVNS), serve as a signal peptide directing secretion. The tract at residues 88–122 (GRGAEDSKADQEANQWGRSGNDPNHFRPKGLPDKY) is disordered. Polar residues predominate over residues 99-109 (EANQWGRSGND).

The protein belongs to the SAA family. As to expression, expressed by the liver; secreted in plasma. Expressed in synovial fibroblasts.

The protein localises to the secreted. Functionally, major acute phase reactant. Apolipoprotein of the HDL complex. In vitro exhibits antimicrobial activity against Escherichia coli, Streptococcus uberis and Pseudomonas aeruginosa. This chain is Serum amyloid A-3 protein (SAA3), found in Oryctolagus cuniculus (Rabbit).